We begin with the raw amino-acid sequence, 295 residues long: GATA zinc finger domain-containing protein 23 (295 aa).

Low complexity predominate over residues 115-126; the sequence is ASTSKTATSKNV. The disordered stretch occupies residues 115–240; sequence ASTSKTATSK…KRGRPSKIQP (126 aa). A compositionally biased stretch (polar residues) spans 127–145; sequence ISNIENNTNKSQPLESNDL. Residues 146–163 show a composition bias toward low complexity; it reads TPPSSKSSNSSPSTSPSK. A compositionally biased stretch (basic residues) spans 164–174; sequence RVSKSKTRVTK. Low complexity predominate over residues 181–227; it reads STSSSGETENLTTTSTADTTATTDTADTTDGTNTRTSNTSSDDTTTE. Residues 229–241 constitute a DNA-binding region (a.T hook); it reads TKKRGRPSKIQPD. Residues 243 to 270 form a GATA-type zinc finger; the sequence is CYVCRRTFTSYWRKGIFNDQNEDLCNPC.

This is GATA zinc finger domain-containing protein 23 (gtaW) from Dictyostelium discoideum (Social amoeba).